A 124-amino-acid polypeptide reads, in one-letter code: MVNIGLSKVDDAIVAKHPGLQQYVACQSYAFMKGTASFILGTVGIFFGQRALQKIIKYPLQWNLFVSIVSSSVFSYSVTRWETMKCSDVWLFLETGNIPDRNSDKEEPETSADSTTTQHEDVLE.

2 helical membrane-spanning segments follow: residues 29 to 48 and 60 to 78; these read YAFM…IFFG and LQWN…SYSV. A disordered region spans residues 97-124; the sequence is NIPDRNSDKEEPETSADSTTTQHEDVLE.

It belongs to the TMEM141 family.

It is found in the membrane. The sequence is that of Transmembrane protein 141 (tmem141) from Danio rerio (Zebrafish).